A 320-amino-acid chain; its full sequence is N-acetylneuraminate lyase (320 aa).

Aceneuramate is bound by residues T51 and T52. Y143 serves as the catalytic Proton donor. The active-site Schiff-base intermediate with substrate is the K173. Residues S175, G199, D201, E202, and S218 each coordinate aceneuramate.

Belongs to the DapA family. NanA subfamily. Homotetramer. In terms of tissue distribution, isoform 2 is expressed in placenta, liver, kidney, pancreas, spleen, thymus, ovary, small intestine and peripheral blood leukocyte.

It localises to the cytoplasm. The catalysed reaction is aceneuramate = aldehydo-N-acetyl-D-mannosamine + pyruvate. Its pathway is amino-sugar metabolism; N-acetylneuraminate degradation. Catalyzes the cleavage of N-acetylneuraminic acid (sialic acid) to form pyruvate and N-acetylmannosamine via a Schiff base intermediate. It prevents sialic acids from being recycled and returning to the cell surface. Involved in the N-glycolylneuraminic acid (Neu5Gc) degradation pathway. Although human is not able to catalyze formation of Neu5Gc due to the inactive CMAHP enzyme, Neu5Gc is present in food and must be degraded. This is N-acetylneuraminate lyase from Homo sapiens (Human).